Here is a 174-residue protein sequence, read N- to C-terminus: RNA pyrophosphohydrolase (174 aa).

The Nudix hydrolase domain maps to 6 to 149 (GFRANVGIVI…KREVYRRAMK (144 aa)). The Nudix box motif lies at 38–59 (GGIDEGETAEQTMYRELYEEVG).

It belongs to the Nudix hydrolase family. RppH subfamily. It depends on a divalent metal cation as a cofactor.

Accelerates the degradation of transcripts by removing pyrophosphate from the 5'-end of triphosphorylated RNA, leading to a more labile monophosphorylated state that can stimulate subsequent ribonuclease cleavage. This is RNA pyrophosphohydrolase from Pseudoalteromonas atlantica (strain T6c / ATCC BAA-1087).